A 322-amino-acid polypeptide reads, in one-letter code: Ubiquitin-conjugating enzyme E2 U (322 aa).

In terms of domain architecture, UBC core spans 4–153 (RAYLLLQRDF…LKLFNRPLQM (150 aa)). The Glycyl thioester intermediate role is filled by cysteine 89.

Belongs to the ubiquitin-conjugating enzyme family. Post-translationally, autoubiquitinated in vitro in the presence of UBR5.

It catalyses the reaction S-ubiquitinyl-[E1 ubiquitin-activating enzyme]-L-cysteine + [E2 ubiquitin-conjugating enzyme]-L-cysteine = [E1 ubiquitin-activating enzyme]-L-cysteine + S-ubiquitinyl-[E2 ubiquitin-conjugating enzyme]-L-cysteine.. It participates in protein modification; protein ubiquitination. Catalyzes the covalent attachment of ubiquitin to other proteins. This chain is Ubiquitin-conjugating enzyme E2 U (UBE2U), found in Macaca fascicularis (Crab-eating macaque).